A 259-amino-acid polypeptide reads, in one-letter code: Undecaprenyl-diphosphatase 3 (259 aa).

The next 8 helical transmembrane spans lie at 1 to 21 (MNWL…FLPI), 39 to 59 (AGLF…FIYY), 71 to 91 (FSKL…IGLL), 99 to 119 (ISKT…FLYM), 133 to 153 (ITYK…FPAI), 174 to 194 (AYFS…LQFV), 208 to 228 (SLIV…SWMI), and 236 to 256 (LKVF…LQFT).

This sequence belongs to the UppP family.

It is found in the cell membrane. The enzyme catalyses di-trans,octa-cis-undecaprenyl diphosphate + H2O = di-trans,octa-cis-undecaprenyl phosphate + phosphate + H(+). In terms of biological role, catalyzes the dephosphorylation of undecaprenyl diphosphate (UPP). Confers resistance to bacitracin. This is Undecaprenyl-diphosphatase 3 from Bacillus cereus (strain ATCC 10987 / NRS 248).